Consider the following 355-residue polypeptide: Probable dual-specificity RNA methyltransferase RlmN (355 aa).

The Proton acceptor role is filled by E107. One can recognise a Radical SAM core domain in the interval 113-341; the sequence is TDKRLTVCVS…VSVRYSRGLE (229 aa). C120 and C346 are disulfide-bonded. Residues C127, C131, and C134 each contribute to the [4Fe-4S] cluster site. Residues 174-175, S204, 227-229, and N303 each bind S-adenosyl-L-methionine; these read GE and SLH. C346 (S-methylcysteine intermediate) is an active-site residue.

It belongs to the radical SAM superfamily. RlmN family. It depends on [4Fe-4S] cluster as a cofactor.

The protein resides in the cytoplasm. The catalysed reaction is adenosine(2503) in 23S rRNA + 2 reduced [2Fe-2S]-[ferredoxin] + 2 S-adenosyl-L-methionine = 2-methyladenosine(2503) in 23S rRNA + 5'-deoxyadenosine + L-methionine + 2 oxidized [2Fe-2S]-[ferredoxin] + S-adenosyl-L-homocysteine. It catalyses the reaction adenosine(37) in tRNA + 2 reduced [2Fe-2S]-[ferredoxin] + 2 S-adenosyl-L-methionine = 2-methyladenosine(37) in tRNA + 5'-deoxyadenosine + L-methionine + 2 oxidized [2Fe-2S]-[ferredoxin] + S-adenosyl-L-homocysteine. Functionally, specifically methylates position 2 of adenine 2503 in 23S rRNA and position 2 of adenine 37 in tRNAs. This chain is Probable dual-specificity RNA methyltransferase RlmN, found in Trichormus variabilis (strain ATCC 29413 / PCC 7937) (Anabaena variabilis).